A 208-amino-acid polypeptide reads, in one-letter code: 3-demethoxyubiquinol 3-hydroxylase (208 aa).

Residues Glu57, Glu87, His90, Glu139, Glu171, and His174 each contribute to the Fe cation site.

The protein belongs to the COQ7 family. Requires Fe cation as cofactor.

It localises to the cell membrane. It catalyses the reaction a 5-methoxy-2-methyl-3-(all-trans-polyprenyl)benzene-1,4-diol + AH2 + O2 = a 3-demethylubiquinol + A + H2O. It participates in cofactor biosynthesis; ubiquinone biosynthesis. Catalyzes the hydroxylation of 2-nonaprenyl-3-methyl-6-methoxy-1,4-benzoquinol during ubiquinone biosynthesis. This chain is 3-demethoxyubiquinol 3-hydroxylase, found in Nitrosomonas europaea (strain ATCC 19718 / CIP 103999 / KCTC 2705 / NBRC 14298).